Consider the following 620-residue polypeptide: 1-deoxy-D-xylulose-5-phosphate synthase (620 aa).

Residues histidine 80 and 121-123 (GHS) contribute to the thiamine diphosphate site. Residue aspartate 152 coordinates Mg(2+). Residues 153–154 (GA), asparagine 181, tyrosine 288, and glutamate 370 contribute to the thiamine diphosphate site. Asparagine 181 is a Mg(2+) binding site.

The protein belongs to the transketolase family. DXPS subfamily. Homodimer. The cofactor is Mg(2+). Requires thiamine diphosphate as cofactor.

It catalyses the reaction D-glyceraldehyde 3-phosphate + pyruvate + H(+) = 1-deoxy-D-xylulose 5-phosphate + CO2. The protein operates within metabolic intermediate biosynthesis; 1-deoxy-D-xylulose 5-phosphate biosynthesis; 1-deoxy-D-xylulose 5-phosphate from D-glyceraldehyde 3-phosphate and pyruvate: step 1/1. Its function is as follows. Catalyzes the acyloin condensation reaction between C atoms 2 and 3 of pyruvate and glyceraldehyde 3-phosphate to yield 1-deoxy-D-xylulose-5-phosphate (DXP). The polypeptide is 1-deoxy-D-xylulose-5-phosphate synthase (Salmonella choleraesuis (strain SC-B67)).